We begin with the raw amino-acid sequence, 235 residues long: Ubiquinone/menaquinone biosynthesis C-methyltransferase UbiE (235 aa).

S-adenosyl-L-methionine-binding residues include T60 and D81.

Belongs to the class I-like SAM-binding methyltransferase superfamily. MenG/UbiE family.

It catalyses the reaction a 2-demethylmenaquinol + S-adenosyl-L-methionine = a menaquinol + S-adenosyl-L-homocysteine + H(+). It carries out the reaction a 2-methoxy-6-(all-trans-polyprenyl)benzene-1,4-diol + S-adenosyl-L-methionine = a 5-methoxy-2-methyl-3-(all-trans-polyprenyl)benzene-1,4-diol + S-adenosyl-L-homocysteine + H(+). It participates in quinol/quinone metabolism; menaquinone biosynthesis; menaquinol from 1,4-dihydroxy-2-naphthoate: step 2/2. The protein operates within cofactor biosynthesis; ubiquinone biosynthesis. Methyltransferase required for the conversion of demethylmenaquinol (DMKH2) to menaquinol (MKH2) and the conversion of 2-polyprenyl-6-methoxy-1,4-benzoquinol (DDMQH2) to 2-polyprenyl-3-methyl-6-methoxy-1,4-benzoquinol (DMQH2). The chain is Ubiquinone/menaquinone biosynthesis C-methyltransferase UbiE from Geotalea daltonii (strain DSM 22248 / JCM 15807 / FRC-32) (Geobacter daltonii).